Consider the following 365-residue polypeptide: tRNA-specific 2-thiouridylase MnmA (365 aa).

ATP is bound by residues 6 to 13 (GMSGGVDS) and M32. Positions 92–94 (NPD) are interaction with target base in tRNA. The Nucleophile role is filled by C97. Cysteines 97 and 197 form a disulfide. G121 is an ATP binding site. The interval 147-149 (KDQ) is interaction with tRNA. C197 (cysteine persulfide intermediate) is an active-site residue. The tract at residues 315-316 (RY) is interaction with tRNA.

Belongs to the MnmA/TRMU family.

It localises to the cytoplasm. It carries out the reaction S-sulfanyl-L-cysteinyl-[protein] + uridine(34) in tRNA + AH2 + ATP = 2-thiouridine(34) in tRNA + L-cysteinyl-[protein] + A + AMP + diphosphate + H(+). Functionally, catalyzes the 2-thiolation of uridine at the wobble position (U34) of tRNA, leading to the formation of s(2)U34. The sequence is that of tRNA-specific 2-thiouridylase MnmA from Azoarcus sp. (strain BH72).